Reading from the N-terminus, the 458-residue chain is F-box/LRR-repeat protein At5g02910 (458 aa).

The 47-residue stretch at M10–D56 folds into the F-box domain. LRR repeat units lie at residues C57–T84, L86–S112, K133–S161, N162–Y187, C226–I251, T260–G285, K325–D353, and E389–L414.

This is F-box/LRR-repeat protein At5g02910 from Arabidopsis thaliana (Mouse-ear cress).